A 1014-amino-acid chain; its full sequence is MALYFVYLSTLLALILLGDNWAAGTYASRYTQHVDENQSGAAAQSGSKVTSRHRNWCAYVVTRTVSCVMEDGVETYVKPEYQRCAWGQCSHVVLYRTYRKPRYKVAYKVVSEMEWKCCHGYSGDDCSDGSSAIHDSRARPTGEEGRSDSDRIRQLEEQIQSLNKNLHNLQKKIYEESQREGISGGNNLADAAQPGMKETIHSIQTKLDMLDNMTRVHDKTLTNINNHLVGGNGIENELDSRYGTLKEEILRELERRVTLSCSSCQTGVESIQRQHQEDRERIRELEKHISVMEQHHQQTLDLLSRSQSCCDSLDRKLSAIDRKVSSTAETYDILRGRLEKELRSNGNGGRGKAMEEKLNNRLRDLERRLNGTVRKTEQKCSHTETSMKEFVQREIGQIKNSVLGRNDDHGYRISTVEIDIQDLKRFINDHKNNLERLGNKTNDLDSGLKSAIHLCTETCAAKGSETEDTVKSLEWKVVANEEDIKKFDTKLKDISVSGDSLLDRVIDLSNDVQKIKDLTGQNGEHFNQIVTDVENLGRDCDVCSSIDGELQKIRNVTSYAFDKFQAELTVLGRKVFSDEHVCSQVCSNLQEEVGKLKEEVEKCTGQCMISMADHQRNVDNQNTVTRKLGKDLKSIQGELTGILQIFNSINDTLKGLRNTIQKHGNNITDLNTSKGKIYLELDQLYDDLNKHKVDSKGHFDSISSFNSNLMTEMGECRLSREGLDKRLSKMEDVCGRLDTLSENLKTIKDGLSKHVSGLWTCVNDLNSTVISHSETISRIHNVHLENIQGRMNNLNSSIRNVLKEFQIFTEQDFTGPPGLPGPQGEKGSKGPPGPRGPLGKEGPQGRVGPVGPPGLRGEQGPPGKDANVPRLSFSAALTRPQASSGTIIFNKVFINERKAYNPKTGVFTAPVRGRYFFSAVLTGHKNVKIEAVLSKSNFGIARGDSAGYQPEGLEKPMAEARHTPGSLVIFNIVLPLQEGDTICIDLVTGKLAHSVEPLTIFSGMLLYEESEDRL.

Residues Met-1–Ala-27 form the signal peptide. The EMI domain maps to His-53–Asp-128. Disulfide bonds link Cys-57/Cys-118, Cys-84/Cys-89, and Cys-117/Cys-126. Disordered regions lie at residues Asp-125–Asp-150 and Gln-811–Pro-869. The segment covering His-134–Asp-150 has biased composition (basic and acidic residues). A coiled-coil region spans residues Gly-145–Arg-179. The Collagen-like domain maps to Gly-815–Asp-865. A compositionally biased stretch (low complexity) spans Lys-840–Arg-856. A C1q domain is found at Ala-866–Asp-1012.

It localises to the secreted. The protein localises to the extracellular space. The protein resides in the extracellular matrix. Functionally, may be responsible for anchoring smooth muscle cells to elastic fibers, and may be involved not only in the formation of the elastic fiber, but also in the processes that regulate vessel assembly. Has cell adhesive capacity. This is EMILIN-1-A from Danio rerio (Zebrafish).